A 131-amino-acid chain; its full sequence is UPF0102 protein YraN (131 aa).

Polar residues predominate over residues 1 to 19 (MATVPTRSGSPRQLTTKQT). Residues 1-21 (MATVPTRSGSPRQLTTKQTGD) are disordered.

This sequence belongs to the UPF0102 family.

The polypeptide is UPF0102 protein YraN (Escherichia coli O45:K1 (strain S88 / ExPEC)).